Here is a 133-residue protein sequence, read N- to C-terminus: Small ribosomal subunit protein uS8 (133 aa).

It belongs to the universal ribosomal protein uS8 family. As to quaternary structure, part of the 30S ribosomal subunit.

Its function is as follows. One of the primary rRNA binding proteins, it binds directly to 16S rRNA central domain where it helps coordinate assembly of the platform of the 30S subunit. The chain is Small ribosomal subunit protein uS8 from Sulfolobus acidocaldarius (strain ATCC 33909 / DSM 639 / JCM 8929 / NBRC 15157 / NCIMB 11770).